The chain runs to 313 residues: Probable alpha-L-glutamate ligase (313 aa).

Residues 112 to 294 (LQMLMAQGIA…IALQMIVHLE (183 aa)) enclose the ATP-grasp domain. Residues Lys148, 185–186 (EF), Asp194, and 218–220 (RAN) contribute to the ATP site. Positions 255, 267, and 269 each coordinate Mg(2+). Asp255, Glu267, and Asn269 together coordinate Mn(2+).

This sequence belongs to the RimK family. Mg(2+) is required as a cofactor. Mn(2+) serves as cofactor.

This is Probable alpha-L-glutamate ligase from Pasteurella multocida (strain Pm70).